Consider the following 666-residue polypeptide: tRNA 5-methylaminomethyl-2-thiouridine biosynthesis bifunctional protein MnmC (666 aa).

Positions 1–245 are tRNA (mnm(5)s(2)U34)-methyltransferase; it reads MKQYAIQPAT…KREMLCGVME (245 aa). Positions 270 to 666 are FAD-dependent cmnm(5)s(2)U34 oxidoreductase; sequence IGGGIASALL…RKLLKGKAVK (397 aa).

In the N-terminal section; belongs to the methyltransferase superfamily. tRNA (mnm(5)s(2)U34)-methyltransferase family. It in the C-terminal section; belongs to the DAO family. The cofactor is FAD.

It localises to the cytoplasm. It catalyses the reaction 5-aminomethyl-2-thiouridine(34) in tRNA + S-adenosyl-L-methionine = 5-methylaminomethyl-2-thiouridine(34) in tRNA + S-adenosyl-L-homocysteine + H(+). Its function is as follows. Catalyzes the last two steps in the biosynthesis of 5-methylaminomethyl-2-thiouridine (mnm(5)s(2)U) at the wobble position (U34) in tRNA. Catalyzes the FAD-dependent demodification of cmnm(5)s(2)U34 to nm(5)s(2)U34, followed by the transfer of a methyl group from S-adenosyl-L-methionine to nm(5)s(2)U34, to form mnm(5)s(2)U34. This Salmonella paratyphi B (strain ATCC BAA-1250 / SPB7) protein is tRNA 5-methylaminomethyl-2-thiouridine biosynthesis bifunctional protein MnmC.